A 128-amino-acid chain; its full sequence is Ribonuclease P protein component (128 aa).

The protein belongs to the RnpA family. As to quaternary structure, consists of a catalytic RNA component (M1 or rnpB) and a protein subunit.

The catalysed reaction is Endonucleolytic cleavage of RNA, removing 5'-extranucleotides from tRNA precursor.. Functionally, RNaseP catalyzes the removal of the 5'-leader sequence from pre-tRNA to produce the mature 5'-terminus. It can also cleave other RNA substrates such as 4.5S RNA. The protein component plays an auxiliary but essential role in vivo by binding to the 5'-leader sequence and broadening the substrate specificity of the ribozyme. The protein is Ribonuclease P protein component of Prochlorococcus marinus (strain NATL2A).